Reading from the N-terminus, the 669-residue chain is Putative transcription factor SOX-14 (669 aa).

The span at 1-12 shows a compositional bias: polar residues; that stretch reads MIAKPNQATTEP. Disordered stretches follow at residues 1–149, 254–336, and 419–439; these read MIAK…EMTL, YKYR…PKYE, and SSLT…MDNI. Residues 17 to 37 are compositionally biased toward low complexity; it reads RPGTVPTVPATTPARPATITI. Over residues 52–71 the composition is skewed to pro residues; it reads TLPPFSPSPSPASSPSPAPA. The span at 75–84 shows a compositional bias: polar residues; sequence GAQKTQSQAA. Over residues 88–105 the composition is skewed to low complexity; sequence PAAVASPSAPVAAAAPKT. Residues 130–145 are compositionally biased toward basic and acidic residues; the sequence is RESEMDGERSPSHSGH. A DNA-binding region (HMG box) is located at residues 187–255; sequence IKRPMNAFMV…LHMIEYPNYK (69 aa). Low complexity predominate over residues 284-294; that stretch reads TTNNNNSLTTL. Over residues 295 to 318 the composition is skewed to polar residues; that stretch reads AINGTTTAGRKSKRSTSTCQSGSA. Over residues 322–336 the composition is skewed to basic and acidic residues; the sequence is LRNDSGDTSSKPKYE. The segment covering 419–431 has biased composition (polar residues); it reads SSLTQSQHNQSDP.

Its subcellular location is the nucleus. The protein is Putative transcription factor SOX-14 (Sox14) of Drosophila melanogaster (Fruit fly).